A 1738-amino-acid polypeptide reads, in one-letter code: Sodium leak channel NALCN (1738 aa).

The Cytoplasmic segment spans residues 1-36 (MLKRKQSSRVEAQPVTDFGPDESLSDNADILWINKP). The helical transmembrane segment at 37 to 57 (WVHSLLRICAIISVISVCMNT) threads the bilayer. Residues 58 to 65 (PMTFEHYP) are Extracellular-facing. The helical transmembrane segment at 66–90 (PLQYVTFTLDTLLMFLYTAEMIAKM) threads the bilayer. At 91–106 (HIRGIVKGDSSYVKDR) the chain is on the cytoplasmic side. A helical membrane pass occupies residues 107 to 129 (WCVFDGFMVFCLWVSLVLQVFEI). The Extracellular segment spans residues 130-137 (ADIVDQMS). The chain crosses the membrane as a helical; Voltage-sensor span at residues 138-158 (PWGMLRIPRPLIMIRAFRIYF). Topologically, residues 159–173 (RFELPRTRITNILKR) are cytoplasmic. Residues 174 to 199 (SGEQIWSVSIFLLFFLLLYGILGVQM) form a helical membrane-spanning segment. The Extracellular portion of the chain corresponds to 200–269 (FGTFTYHCVV…YSGFNEIGTS (70 aa)). Cystine bridges form between Cys-207/Cys-239 and Cys-229/Cys-245. N-linked (GlcNAc...) asparagine glycans are attached at residues Asn-210 and Asn-216. Positions 270–289 (IFTVYEAASQEGWVFLMYRA) form an intramembrane region, pore-forming. Residues 290-294 (IDSFP) are Extracellular-facing. A helical transmembrane segment spans residues 295–322 (RWRSYFYFITLIFFLAWLVKNVFIAVII). Topologically, residues 323-382 (ETFAEIRVQFQQMWGSRSSTTSTATTQMFHEDAAGGWQLVAVDVNKPQGRAPACLQKMMR) are cytoplasmic. A helical transmembrane segment spans residues 383–403 (SSVFHMFILSMVTVDVIVAAS). The Extracellular portion of the chain corresponds to 404-416 (NYYKGENFRRQYD). Residues 417–439 (EFYLAEVAFTVLFDLEALLKIWC) traverse the membrane as a helical segment. Residues 440–447 (LGFTGYIS) are Cytoplasmic-facing. Residues 448–468 (SSLHKFELLLVIGTTLHVYPD) traverse the membrane as a helical segment. Topologically, residues 469–472 (LYHS) are extracellular. A helical; Voltage-sensor transmembrane segment spans residues 473–492 (QFTYFQVLRVVRLIKISPAL). The Cytoplasmic portion of the chain corresponds to 493 to 502 (EDFVYKIFGP). A helical transmembrane segment spans residues 503-530 (GKKLGSLVVFTASLLIVMSAISLQMFCF). Residues 531–543 (VEELDRFTTFPRA) are Extracellular-facing. Residues 544-563 (FMSMFQILTQEGWVDVMDQT) constitute an intramembrane region (pore-forming). The Extracellular segment spans residues 564–569 (LNAVGH). Residues 570 to 599 (MWAPVVAIYFILYHLFATLILLSLFVAVIL) traverse the membrane as a helical segment. Over 600–886 (DNLELDEDLK…QLYDLLGLVT (287 aa)) the chain is Cytoplasmic. The segment at 762–785 (QERRSLRHGSNSQRISRGKSLETL) is disordered. Positions 795–830 (YRNAQREDSEIKMIQEKKEQAEMKRKVQEEELRENH) form a coiled coil. A helical membrane pass occupies residues 887–906 (YLDWVMIIVTICSCISMMFE). Over 907 to 915 (SPFRRVMHA) the chain is Extracellular. A helical transmembrane segment spans residues 916 to 939 (PTLQIAEYVFVIFMSIELNLKIMA). The Cytoplasmic segment spans residues 940-947 (DGLFFTPT). Residues 948 to 972 (AVIRDFGGVMDIFIYLVSLIFLCWM) traverse the membrane as a helical segment. Topologically, residues 973–980 (PQNVPAES) are extracellular. The chain crosses the membrane as a helical; Voltage-sensor span at residues 981–1003 (GAQLLMVLRCLRPLRIFKLVPQM). The Cytoplasmic segment spans residues 1004–1015 (RKVVRELFSGFK). The helical transmembrane segment at 1016–1039 (EIFLVSILLLTLMLVFASFGVQLF) threads the bilayer. Residues 1040-1104 (AGKLAKCNDP…NFNFDNVGNA (65 aa)) are Extracellular-facing. A disulfide bond links Cys-1046 and Cys-1057. A glycan (N-linked (GlcNAc...) asparagine) is linked at Asn-1064. Positions 1105–1124 (MLALFEVLSLKGWVEVRDVI) form an intramembrane region, pore-forming. The Extracellular portion of the chain corresponds to 1125-1129 (IHRVG). The chain crosses the membrane as a helical span at residues 1130 to 1159 (PIHGIYIHVFVFLGCMIGLTLFVGVVIANF). The Cytoplasmic segment spans residues 1160 to 1210 (NENKGTALLTVDQRRWEDLKSRLKIAQPLHLPPRPDNDGFRAKMYDITQHP). A helical transmembrane segment spans residues 1211–1227 (FFKRTIALLVLAQSVLL). The Extracellular segment spans residues 1228–1236 (SVKWDVEDP). The helical transmembrane segment at 1237-1260 (VTVPLATMSVVFTFIFVLEVTMKI) threads the bilayer. At 1261 to 1271 (IAMSPAGFWQS) the chain is on the cytoplasmic side. Residues 1272 to 1293 (RRNRYDLLVTSLGVVWVVLHFA) traverse the membrane as a helical segment. At 1294–1296 (LLN) the chain is on the extracellular side. A helical; Voltage-sensor membrane pass occupies residues 1297 to 1318 (AYTYMMGACVIVFRFFSICGKH). The Cytoplasmic portion of the chain corresponds to 1319–1331 (VTLKMLLLTVVVS). Residues 1332 to 1357 (MYKSFFIIVGMFLLLLCYAFAGVVLF) form a helical membrane-spanning segment. Residues 1358–1378 (GTVKYGENINRHANFSSAGKA) lie on the Extracellular side of the membrane. Residues 1379-1398 (ITVLFRIVTGEDWNKIMHDC) constitute an intramembrane region (pore-forming). Over 1399–1420 (MVQPPFCTPDEFTYWATDCGNY) the chain is Extracellular. An intrachain disulfide couples Cys-1405 to Cys-1417. A helical transmembrane segment spans residues 1421 to 1447 (AGALMYFCSFYVIIAYIMLNLLVAIIV). Residues 1448–1738 (ENFSLFYSTE…DESGDDLLDI (291 aa)) are Cytoplasmic-facing. The interval 1611–1678 (PPSIETTQPS…QWRLPSAPKP (68 aa)) is disordered. Positions 1613 to 1632 (SIETTQPSEDTNANSQDNSM) are enriched in polar residues. Residues 1633 to 1648 (QPETSSQQQLLSPTLS) are compositionally biased toward low complexity.

It belongs to the NALCN family. As to quaternary structure, found in a complex with NALCN, UNC79, UNC80 and NACL1; these auxiliary subunits are indispensable for the function of NALCN channel. Interacts with UNC80; required for the NALCN activation/inhibition by GPCRs in neurons. Found in a complex with NALCN, UNC79 and UNC80; UNC80 bridges NALCN to UNC79. Interacts with CHRM3. In terms of processing, phosphorylated on tyrosine residues.

The protein localises to the cell membrane. It catalyses the reaction Na(+)(in) = Na(+)(out). Its activity is regulated as follows. Inhibited by low micromolar concentrations of Gd(3+) and high micromolar concentrations of verapamil. Insensitive to tetrodotoxin (TTX) and potentiated by low external Ca(2+) concentration. In terms of biological role, voltage-gated ion channel responsible for the resting Na(+) permeability that controls neuronal excitability. NALCN channel functions as a multi-protein complex, which consists at least of NALCN, NALF1, UNC79 and UNC80. NALCN is the voltage-sensing, pore-forming subunit of the NALCN channel complex. NALCN channel complex is constitutively active and conducts monovalent cations but is blocked by physiological concentrations of extracellular divalent cations. In addition to its role in regulating neuronal excitability, is required for normal respiratory rhythm, systemic osmoregulation by controlling the serum sodium concentration and in the regulation of the intestinal pace-making activity in the interstitial cells of Cajal. NALCN channel is also activated by neuropeptides such as neurotensin and substance P (SP) through a SRC family kinases-dependent pathway. In addition, NALCN activity is enhanced/modulated by several GPCRs, such as CHRM3. This is Sodium leak channel NALCN from Homo sapiens (Human).